A 64-amino-acid polypeptide reads, in one-letter code: Large ribosomal subunit protein bL33c (64 aa).

It belongs to the bacterial ribosomal protein bL33 family.

The protein resides in the plastid. The protein localises to the chloroplast. The protein is Large ribosomal subunit protein bL33c of Thalassiosira pseudonana (Marine diatom).